The sequence spans 549 residues: Alanine aminotransferase 2-like (549 aa).

The residue at position 367 (K367) is an N6-(pyridoxal phosphate)lysine.

The protein belongs to the class-I pyridoxal-phosphate-dependent aminotransferase family. Alanine aminotransferase subfamily. As to quaternary structure, homodimer. Requires pyridoxal 5'-phosphate as cofactor.

It carries out the reaction L-alanine + 2-oxoglutarate = pyruvate + L-glutamate. It participates in amino-acid degradation; L-alanine degradation via transaminase pathway; pyruvate from L-alanine: step 1/1. In terms of biological role, catalyzes the reversible transamination between alanine and 2-oxoglutarate to form pyruvate and glutamate. The sequence is that of Alanine aminotransferase 2-like (gpt2l) from Danio rerio (Zebrafish).